The sequence spans 353 residues: Iron(III) enterobactin esterase (353 aa).

It belongs to the Fes family.

The protein resides in the cytoplasm. It carries out the reaction Fe(III)-enterobactin + 3 H2O + H(+) = Fe(III)-[N-(2,3-dihydroxybenzoyl)-L-serine] + 2 N-(2,3-dihydroxybenzoyl)-L-serine. The enzyme catalyses Fe(III)-enterobactin + H2O = Fe(III)-[N-(2,3-dihydroxybenzoyl)-L-serine]3 + H(+). The catalysed reaction is Fe(III)-[N-(2,3-dihydroxybenzoyl)-L-serine]3 + H2O + H(+) = Fe(III)-[N-(2,3-dihydroxybenzoyl)-L-serine]2 + N-(2,3-dihydroxybenzoyl)-L-serine. It catalyses the reaction Fe(III)-[N-(2,3-dihydroxybenzoyl)-L-serine]2 + H2O + H(+) = Fe(III)-[N-(2,3-dihydroxybenzoyl)-L-serine] + N-(2,3-dihydroxybenzoyl)-L-serine. Functionally, catalyzes the hydrolysis of ferric enterobactin (Fe-Ent). Is responsible for the release of iron from ferric enterobactin. The polypeptide is Iron(III) enterobactin esterase (Yersinia enterocolitica).